The sequence spans 277 residues: 3-methyl-2-oxobutanoate hydroxymethyltransferase (277 aa).

Asp-43 and Asp-82 together coordinate Mg(2+). Residues 43 to 44 (DS), Asp-82, and Lys-112 contribute to the 3-methyl-2-oxobutanoate site. Glu-114 is a Mg(2+) binding site. Glu-181 acts as the Proton acceptor in catalysis.

It belongs to the PanB family. Homodecamer; pentamer of dimers. It depends on Mg(2+) as a cofactor.

It localises to the cytoplasm. It catalyses the reaction 3-methyl-2-oxobutanoate + (6R)-5,10-methylene-5,6,7,8-tetrahydrofolate + H2O = 2-dehydropantoate + (6S)-5,6,7,8-tetrahydrofolate. The protein operates within cofactor biosynthesis; (R)-pantothenate biosynthesis; (R)-pantoate from 3-methyl-2-oxobutanoate: step 1/2. Functionally, catalyzes the reversible reaction in which hydroxymethyl group from 5,10-methylenetetrahydrofolate is transferred onto alpha-ketoisovalerate to form ketopantoate. This is 3-methyl-2-oxobutanoate hydroxymethyltransferase from Listeria monocytogenes serotype 4b (strain CLIP80459).